Consider the following 350-residue polypeptide: Protein RecA (350 aa).

Residue 67 to 74 (GPESSGKT) participates in ATP binding.

Belongs to the RecA family.

The protein resides in the cytoplasm. In terms of biological role, can catalyze the hydrolysis of ATP in the presence of single-stranded DNA, the ATP-dependent uptake of single-stranded DNA by duplex DNA, and the ATP-dependent hybridization of homologous single-stranded DNAs. It interacts with LexA causing its activation and leading to its autocatalytic cleavage. This is Protein RecA from Mycobacterium avium (strain 104).